The sequence spans 154 residues: MSNKTELRVEAIKNGTVIDHIPANIGVKVLKLFQMDKTAERVTIGLNLPSSALGSKDLLKIENTFVTPEQASKLALYAPHATVNQIENYEVVKKIPLILPKQITGVFECPNSNCITHGEPVDSSFKVIAKKGNIHLKCKYCEKVYSQEVVTDLH.

Positions 109, 114, 138, and 141 each coordinate Zn(2+).

The protein belongs to the PyrI family. Contains catalytic and regulatory chains. It depends on Zn(2+) as a cofactor.

Functionally, involved in allosteric regulation of aspartate carbamoyltransferase. The polypeptide is Aspartate carbamoyltransferase regulatory chain (Aliivibrio salmonicida (strain LFI1238) (Vibrio salmonicida (strain LFI1238))).